A 142-amino-acid polypeptide reads, in one-letter code: Hemoglobin subunit alpha-I/II (142 aa).

Residues 2-142 (VLSAADKGNV…VSTVLTSKYR (141 aa)) enclose the Globin domain. Ser4 is modified (phosphoserine). 2 positions are modified to N6-succinyllysine: Lys8 and Lys12. At Lys17 the chain carries N6-acetyllysine; alternate. The residue at position 17 (Lys17) is an N6-succinyllysine; alternate. Tyr25 bears the Phosphotyrosine mark. Ser36 carries the phosphoserine modification. Lys41 is subject to N6-succinyllysine. Residue Ser50 is modified to Phosphoserine. His59 contributes to the O2 binding site. Position 88 (His88) interacts with heme b. Phosphoserine is present on Ser103. Thr109 carries the post-translational modification Phosphothreonine. The residue at position 125 (Ser125) is a Phosphoserine. Thr135 and Thr138 each carry phosphothreonine. Ser139 is subject to Phosphoserine.

The protein belongs to the globin family. In terms of assembly, heterotetramer of two alpha chains and two beta chains. Red blood cells.

Functionally, involved in oxygen transport from the lung to the various peripheral tissues. The chain is Hemoglobin subunit alpha-I/II from Bison bonasus (European bison).